The chain runs to 114 residues: Probable divalent-cation tolerance protein cutA homolog (114 aa).

It belongs to the CutA family. In terms of assembly, homotrimer.

This is Probable divalent-cation tolerance protein cutA homolog from Encephalitozoon cuniculi (strain GB-M1) (Microsporidian parasite).